Reading from the N-terminus, the 244-residue chain is Thaumatin-like protein 1 (244 aa).

The first 22 residues, 1–22, serve as a signal peptide directing secretion; the sequence is MKFEALIGLVLVFLSEHAGVYS. Disulfide bonds link cysteine 31/cysteine 243, cysteine 79/cysteine 89, cysteine 94/cysteine 101, cysteine 149/cysteine 232, cysteine 154/cysteine 215, cysteine 162/cysteine 178, cysteine 182/cysteine 191, and cysteine 192/cysteine 202. N-linked (GlcNAc...) asparagine glycosylation is present at asparagine 150.

This sequence belongs to the thaumatin family. In terms of processing, N-glycosylated. As to expression, style.

It is found in the secreted. In Pyrus pyrifolia (Chinese pear), this protein is Thaumatin-like protein 1 (TL1).